The chain runs to 568 residues: Glycine--tRNA ligase (568 aa).

Arginine 97 and glutamate 163 together coordinate substrate. ATP-binding positions include 195 to 197 (RNE), 205 to 210 (IRLREF), 322 to 323 (EC), and 441 to 444 (GIDR). Position 210 to 214 (210 to 214 (FTQAE)) interacts with substrate. Substrate is bound at residue 437 to 441 (EPSFG).

The protein belongs to the class-II aminoacyl-tRNA synthetase family.

Its subcellular location is the cytoplasm. The enzyme catalyses tRNA(Gly) + glycine + ATP = glycyl-tRNA(Gly) + AMP + diphosphate. Functionally, catalyzes the attachment of glycine to tRNA(Gly). This is Glycine--tRNA ligase from Pyrococcus furiosus (strain ATCC 43587 / DSM 3638 / JCM 8422 / Vc1).